The primary structure comprises 141 residues: Aspartate 1-decarboxylase 1 (141 aa).

The Schiff-base intermediate with substrate; via pyruvic acid role is filled by Ser-25. Ser-25 bears the Pyruvic acid (Ser) mark. Thr-57 lines the substrate pocket. The Proton donor role is filled by Tyr-58. 73–75 (GPA) serves as a coordination point for substrate.

It belongs to the PanD family. In terms of assembly, heterooctamer of four alpha and four beta subunits. It depends on pyruvate as a cofactor. Post-translationally, is synthesized initially as an inactive proenzyme, which is activated by self-cleavage at a specific serine bond to produce a beta-subunit with a hydroxyl group at its C-terminus and an alpha-subunit with a pyruvoyl group at its N-terminus.

The protein localises to the cytoplasm. It carries out the reaction L-aspartate + H(+) = beta-alanine + CO2. It functions in the pathway cofactor biosynthesis; (R)-pantothenate biosynthesis; beta-alanine from L-aspartate: step 1/1. Its function is as follows. Catalyzes the pyruvoyl-dependent decarboxylation of aspartate to produce beta-alanine. This is Aspartate 1-decarboxylase 1 from Paenarthrobacter aurescens (strain TC1).